Reading from the N-terminus, the 185-residue chain is Early nodulin-like protein 17 (185 aa).

Residues 1–21 form the signal peptide; it reads MARRDQLVSFLCFFLIVSAVA. Positions 37 to 137 constitute a Phytocyanin domain; that stretch reads KQYVVGGRSG…GQRLMINVDS (101 aa). N79 and N94 each carry an N-linked (GlcNAc...) asparagine glycan. An intrachain disulfide couples C93 to C125. Residues 136-155 form a disordered region; that stretch reads DSAPSPSPSPSPAPQEAATA. S156 carries the GPI-anchor amidated serine lipid modification. A propeptide spans 157–185 (removed in mature form); that stretch reads AATSSSAATAAHALLLAAMAMMGLILGEW.

This sequence belongs to the early nodulin-like (ENODL) family. In terms of tissue distribution, expressed ubiquitously. Accumulates mainly in anthers, stigmas and ovaries.

The protein resides in the cell membrane. Functionally, may act as a carbohydrate transporter. Required for male fertility and seed yield. This Oryza sativa subsp. japonica (Rice) protein is Early nodulin-like protein 17.